Here is a 206-residue protein sequence, read N- to C-terminus: MALKYKLILASGSPRRVDLLNQAGIEPSRLMPMDIDEAPKKSEHPRSLARRLSAEKAEAALAAIKGDITWKGSYILSADTVVAVGRRILGKAEFADEALNSLHLLSGRNHMVYTGVCLVTPDRKVRQKIVETKVRFKRLSGFEIENYLASGQWRGKAGAYGIQGLAGTFVQKMVGSYTNVVGLPLYETILLLTGEGFDVHSRWPEG.

The Proton acceptor role is filled by D79.

It belongs to the Maf family. YhdE subfamily. A divalent metal cation serves as cofactor.

It is found in the cytoplasm. It catalyses the reaction dTTP + H2O = dTMP + diphosphate + H(+). It carries out the reaction UTP + H2O = UMP + diphosphate + H(+). Functionally, nucleoside triphosphate pyrophosphatase that hydrolyzes dTTP and UTP. May have a dual role in cell division arrest and in preventing the incorporation of modified nucleotides into cellular nucleic acids. This chain is dTTP/UTP pyrophosphatase, found in Rhizobium johnstonii (strain DSM 114642 / LMG 32736 / 3841) (Rhizobium leguminosarum bv. viciae).